A 531-amino-acid chain; its full sequence is T-complex protein 1 subunit zeta-2 (531 aa).

The protein belongs to the TCP-1 chaperonin family. As to quaternary structure, component of the chaperonin-containing T-complex (TRiC), a heterooligomeric complex of about 850 to 900 kDa that forms two stacked rings, 12 to 16 nm in diameter.

It localises to the cytoplasm. Functionally, component of the chaperonin-containing T-complex (TRiC), a molecular chaperone complex that assists the folding of proteins upon ATP hydrolysis. The chain is T-complex protein 1 subunit zeta-2 (CCT6B) from Bos taurus (Bovine).